A 383-amino-acid chain; its full sequence is Lipid-A-disaccharide synthase (383 aa).

It belongs to the LpxB family.

The enzyme catalyses a lipid X + a UDP-2-N,3-O-bis[(3R)-3-hydroxyacyl]-alpha-D-glucosamine = a lipid A disaccharide + UDP + H(+). It participates in bacterial outer membrane biogenesis; LPS lipid A biosynthesis. Its function is as follows. Condensation of UDP-2,3-diacylglucosamine and 2,3-diacylglucosamine-1-phosphate to form lipid A disaccharide, a precursor of lipid A, a phosphorylated glycolipid that anchors the lipopolysaccharide to the outer membrane of the cell. The polypeptide is Lipid-A-disaccharide synthase (Aliivibrio salmonicida (strain LFI1238) (Vibrio salmonicida (strain LFI1238))).